Consider the following 418-residue polypeptide: Serine hydroxymethyltransferase (418 aa).

Residues L121 and 125–127 (GHL) contribute to the (6S)-5,6,7,8-tetrahydrofolate site. K230 is subject to N6-(pyridoxal phosphate)lysine. Residues E246 and 355 to 357 (SPF) each bind (6S)-5,6,7,8-tetrahydrofolate.

It belongs to the SHMT family. As to quaternary structure, homodimer. Pyridoxal 5'-phosphate is required as a cofactor.

The protein localises to the cytoplasm. It carries out the reaction (6R)-5,10-methylene-5,6,7,8-tetrahydrofolate + glycine + H2O = (6S)-5,6,7,8-tetrahydrofolate + L-serine. Its pathway is one-carbon metabolism; tetrahydrofolate interconversion. It participates in amino-acid biosynthesis; glycine biosynthesis; glycine from L-serine: step 1/1. Functionally, catalyzes the reversible interconversion of serine and glycine with tetrahydrofolate (THF) serving as the one-carbon carrier. This reaction serves as the major source of one-carbon groups required for the biosynthesis of purines, thymidylate, methionine, and other important biomolecules. Also exhibits THF-independent aldolase activity toward beta-hydroxyamino acids, producing glycine and aldehydes, via a retro-aldol mechanism. This is Serine hydroxymethyltransferase from Streptococcus pneumoniae serotype 2 (strain D39 / NCTC 7466).